The sequence spans 348 residues: UDP-3-O-acylglucosamine N-acyltransferase (348 aa).

The active-site Proton acceptor is the His-257.

The protein belongs to the transferase hexapeptide repeat family. LpxD subfamily. As to quaternary structure, homotrimer.

The enzyme catalyses a UDP-3-O-[(3R)-3-hydroxyacyl]-alpha-D-glucosamine + a (3R)-hydroxyacyl-[ACP] = a UDP-2-N,3-O-bis[(3R)-3-hydroxyacyl]-alpha-D-glucosamine + holo-[ACP] + H(+). It participates in bacterial outer membrane biogenesis; LPS lipid A biosynthesis. Its function is as follows. Catalyzes the N-acylation of UDP-3-O-acylglucosamine using 3-hydroxyacyl-ACP as the acyl donor. Is involved in the biosynthesis of lipid A, a phosphorylated glycolipid that anchors the lipopolysaccharide to the outer membrane of the cell. This chain is UDP-3-O-acylglucosamine N-acyltransferase, found in Bartonella henselae (strain ATCC 49882 / DSM 28221 / CCUG 30454 / Houston 1) (Rochalimaea henselae).